Consider the following 248-residue polypeptide: Probable transcriptional regulatory protein BARBAKC583_0163 (248 aa).

It belongs to the TACO1 family.

It is found in the cytoplasm. This chain is Probable transcriptional regulatory protein BARBAKC583_0163, found in Bartonella bacilliformis (strain ATCC 35685 / KC583 / Herrer 020/F12,63).